Consider the following 499-residue polypeptide: Protein phosphatase PP2A 55 kDa regulatory subunit (499 aa).

The disordered stretch occupies residues 1–30; it reads MGRWGRQSPVLEPPDPQMQTTPPPPTLPPR. The span at 11–28 shows a compositional bias: pro residues; sequence LEPPDPQMQTTPPPPTLP. 7 WD repeats span residues 79–118, 144–185, 228–266, 277–317, 336–374, 391–432, and 467–498; these read TDAD…KAAN, EIEE…KSFG, AHTY…QSYN, ELTE…LCDR, EIIS…KPIE, ENDC…DVTL, and DFNK…FQDK.

Belongs to the phosphatase 2A regulatory subunit B family. As to quaternary structure, PP2A exists in several trimeric forms, all of which consist of a core composed of a catalytic subunit associated with a 65 kDa regulatory subunit (PR65) (subunit A). The core complex associates with a third, variable subunit (subunit B), which confers distinct properties to the holoenzyme.

Could perform a substrate recognition function or could be responsible for targeting the enzyme complex to the appropriate subcellular compartment. The sequence is that of Protein phosphatase PP2A 55 kDa regulatory subunit (tws) from Drosophila melanogaster (Fruit fly).